The chain runs to 151 residues: Histone H2A.2.1 (151 aa).

Met1 carries the N-acetylmethionine modification. Disordered stretches follow at residues Met1–Val22 and Glu129–Ala151. 2 short sequence motifs (SPKK motif) span residues Ser140–Lys143 and Ser147–Lys150. Over residues Ser140–Ala151 the composition is skewed to basic residues.

This sequence belongs to the histone H2A family. In terms of assembly, the nucleosome is a histone octamer containing two molecules each of H2A, H2B, H3 and H4 assembled in one H3-H4 heterotetramer and two H2A-H2B heterodimers. The octamer wraps approximately 147 bp of DNA. Phosphorylated within its C-terminal part, probably at the SPKK motifs.

The protein resides in the nucleus. The protein localises to the chromosome. Functionally, core component of nucleosome. Nucleosomes wrap and compact DNA into chromatin, limiting DNA accessibility to the cellular machineries which require DNA as a template. Histones thereby play a central role in transcription regulation, DNA repair, DNA replication and chromosomal stability. DNA accessibility is regulated via a complex set of post-translational modifications of histones, also called histone code, and nucleosome remodeling. The chain is Histone H2A.2.1 from Triticum aestivum (Wheat).